A 129-amino-acid chain; its full sequence is Small ribosomal subunit protein uS11 (129 aa).

The protein belongs to the universal ribosomal protein uS11 family. Part of the 30S ribosomal subunit. Interacts with proteins S7 and S18. Binds to IF-3.

In terms of biological role, located on the platform of the 30S subunit, it bridges several disparate RNA helices of the 16S rRNA. Forms part of the Shine-Dalgarno cleft in the 70S ribosome. This chain is Small ribosomal subunit protein uS11, found in Lactobacillus delbrueckii subsp. bulgaricus (strain ATCC 11842 / DSM 20081 / BCRC 10696 / JCM 1002 / NBRC 13953 / NCIMB 11778 / NCTC 12712 / WDCM 00102 / Lb 14).